The primary structure comprises 417 residues: Serine hydroxymethyltransferase (417 aa).

Residues Leu-121 and 125–127 each bind (6S)-5,6,7,8-tetrahydrofolate; that span reads GHL. At Lys-229 the chain carries N6-(pyridoxal phosphate)lysine. 355–357 serves as a coordination point for (6S)-5,6,7,8-tetrahydrofolate; the sequence is SPF.

The protein belongs to the SHMT family. In terms of assembly, homodimer. Requires pyridoxal 5'-phosphate as cofactor.

The protein localises to the cytoplasm. The enzyme catalyses (6R)-5,10-methylene-5,6,7,8-tetrahydrofolate + glycine + H2O = (6S)-5,6,7,8-tetrahydrofolate + L-serine. It participates in one-carbon metabolism; tetrahydrofolate interconversion. The protein operates within amino-acid biosynthesis; glycine biosynthesis; glycine from L-serine: step 1/1. Functionally, catalyzes the reversible interconversion of serine and glycine with tetrahydrofolate (THF) serving as the one-carbon carrier. This reaction serves as the major source of one-carbon groups required for the biosynthesis of purines, thymidylate, methionine, and other important biomolecules. Also exhibits THF-independent aldolase activity toward beta-hydroxyamino acids, producing glycine and aldehydes, via a retro-aldol mechanism. This is Serine hydroxymethyltransferase from Buchnera aphidicola subsp. Acyrthosiphon pisum (strain 5A).